The following is a 120-amino-acid chain: Ribonuclease P protein component (120 aa).

The protein belongs to the RnpA family. Consists of a catalytic RNA component (M1 or rnpB) and a protein subunit.

The enzyme catalyses Endonucleolytic cleavage of RNA, removing 5'-extranucleotides from tRNA precursor.. Its function is as follows. RNaseP catalyzes the removal of the 5'-leader sequence from pre-tRNA to produce the mature 5'-terminus. It can also cleave other RNA substrates such as 4.5S RNA. The protein component plays an auxiliary but essential role in vivo by binding to the 5'-leader sequence and broadening the substrate specificity of the ribozyme. The sequence is that of Ribonuclease P protein component from Azoarcus sp. (strain BH72).